The chain runs to 93 residues: Small ribosomal subunit protein uS19 (93 aa).

The protein belongs to the universal ribosomal protein uS19 family.

Its function is as follows. Protein S19 forms a complex with S13 that binds strongly to the 16S ribosomal RNA. The protein is Small ribosomal subunit protein uS19 of Frankia casuarinae (strain DSM 45818 / CECT 9043 / HFP020203 / CcI3).